The sequence spans 514 residues: MAYRNRNLASQTQRPLAPTAPRRRPVVTPQISDRSRLRGFANVGSGPCHPLTDRAANQHLQTYEANVKGSFELIVPFLKRISALQHDQDFVSKCQSLARSELGFDLPSHLLEQAWVRALDMRALFAWCVFQSHQHVSDHFFQEDPLQGGEGSIQAKHFQSFLVDCGFHLLDVSPCADGRLAHTIAYALRIPFSSVRRRSHAGALFDVEKTVNRWIKTEHRRYREGVPNSADSPTRYLKVVTYHFSSLDPSHQGCAAHGSDDALAASAGQQRLLDFRESVENSFCCGASVDLLLIGLDTDTDAIRVHVPAADGSIVLDEWLSAEDLYHETLSLTSDEAMQHIAERVEAIAPKKPDEGMVAFIVKLIANNFSQIDYVKQSHAGPYPDAGHAERFIGVGIGFKEVHLRNLTYFAHLDTVEVGAPDLDVGVKIFKGLNVSRDLPIPVVVRFDYSGQVPGARDRAVTDCYRVNQAIAERYSELFDQGLLHTFLTIRDRDKKDTSEVVGSSLEPVHQEAH.

The disordered stretch occupies residues 1-27 (MAYRNRNLASQTQRPLAPTAPRRRPVV). Cys175 contacts Zn(2+). Asp177 functions as the Proton acceptor in the catalytic mechanism. Zn(2+)-binding residues include His243 and Cys254.

It belongs to the beta-class carbonic anhydrase family. CsoSCA subfamily. As to quaternary structure, homodimer. Requires Zn(2+) as cofactor.

It is found in the carboxysome. It catalyses the reaction hydrogencarbonate + H(+) = CO2 + H2O. Reversible hydration of carbon dioxide. Essential for photosynthetic carbon dioxide fixation, supplies CO(2) to RuBisCO (ribulose bisphosphate carboxylase, cbbL-cbbS) in the carboxysome. In Prochlorococcus marinus (strain MIT 9313), this protein is Carboxysome shell carbonic anhydrase.